We begin with the raw amino-acid sequence, 570 residues long: Proline--tRNA ligase (570 aa).

The protein belongs to the class-II aminoacyl-tRNA synthetase family. ProS type 1 subfamily. In terms of assembly, homodimer.

It is found in the cytoplasm. The enzyme catalyses tRNA(Pro) + L-proline + ATP = L-prolyl-tRNA(Pro) + AMP + diphosphate. In terms of biological role, catalyzes the attachment of proline to tRNA(Pro) in a two-step reaction: proline is first activated by ATP to form Pro-AMP and then transferred to the acceptor end of tRNA(Pro). As ProRS can inadvertently accommodate and process non-cognate amino acids such as alanine and cysteine, to avoid such errors it has two additional distinct editing activities against alanine. One activity is designated as 'pretransfer' editing and involves the tRNA(Pro)-independent hydrolysis of activated Ala-AMP. The other activity is designated 'posttransfer' editing and involves deacylation of mischarged Ala-tRNA(Pro). The misacylated Cys-tRNA(Pro) is not edited by ProRS. This is Proline--tRNA ligase from Shewanella sp. (strain MR-4).